We begin with the raw amino-acid sequence, 619 residues long: 1-deoxy-D-xylulose-5-phosphate synthase (619 aa).

Residues histidine 74 and 115 to 117 (GHS) contribute to the thiamine diphosphate site. Aspartate 146 contributes to the Mg(2+) binding site. Thiamine diphosphate-binding positions include 147 to 148 (GA), asparagine 175, and tyrosine 285. Asparagine 175 contacts Mg(2+). Positions 289–310 (EKSPSKYHGIPPSNDKKEEPNK) are disordered. A thiamine diphosphate-binding site is contributed by glutamate 365.

This sequence belongs to the transketolase family. DXPS subfamily. As to quaternary structure, homodimer. Requires Mg(2+) as cofactor. Thiamine diphosphate serves as cofactor.

It carries out the reaction D-glyceraldehyde 3-phosphate + pyruvate + H(+) = 1-deoxy-D-xylulose 5-phosphate + CO2. It functions in the pathway metabolic intermediate biosynthesis; 1-deoxy-D-xylulose 5-phosphate biosynthesis; 1-deoxy-D-xylulose 5-phosphate from D-glyceraldehyde 3-phosphate and pyruvate: step 1/1. Catalyzes the acyloin condensation reaction between C atoms 2 and 3 of pyruvate and glyceraldehyde 3-phosphate to yield 1-deoxy-D-xylulose-5-phosphate (DXP). The sequence is that of 1-deoxy-D-xylulose-5-phosphate synthase from Clostridium botulinum (strain Alaska E43 / Type E3).